Here is a 170-residue protein sequence, read N- to C-terminus: Macro domain-containing protein VPA0103 (170 aa).

The 170-residue stretch at methionine 1–histidine 170 folds into the Macro domain.

This sequence belongs to the MacroD-type family.

This chain is Macro domain-containing protein VPA0103, found in Vibrio parahaemolyticus serotype O3:K6 (strain RIMD 2210633).